We begin with the raw amino-acid sequence, 828 residues long: Phenylalanine--tRNA ligase beta subunit (828 aa).

The 112-residue stretch at 44–155 (GPVDGPLTVG…GTAEPGADGA (112 aa)) folds into the tRNA-binding domain. A B5 domain is found at 411 to 486 (WSPPAIQMPA…RLEGLEVIGS (76 aa)). Residues D464, D470, E473, and E474 each contribute to the Mg(2+) site. In terms of domain architecture, FDX-ACB spans 734–827 (SPFPAVFQDV…AAEAVGAELR (94 aa)).

This sequence belongs to the phenylalanyl-tRNA synthetase beta subunit family. Type 1 subfamily. Tetramer of two alpha and two beta subunits. Requires Mg(2+) as cofactor.

Its subcellular location is the cytoplasm. The catalysed reaction is tRNA(Phe) + L-phenylalanine + ATP = L-phenylalanyl-tRNA(Phe) + AMP + diphosphate + H(+). The chain is Phenylalanine--tRNA ligase beta subunit from Mycolicibacterium paratuberculosis (strain ATCC BAA-968 / K-10) (Mycobacterium paratuberculosis).